Consider the following 346-residue polypeptide: tRNA N6-adenosine threonylcarbamoyltransferase (346 aa).

His-111 and His-115 together coordinate Fe cation. Residues 134–138, Asp-167, Gly-180, Asp-184, and Asn-279 each bind substrate; that span reads LVSGG. Asp-307 is a Fe cation binding site.

The protein belongs to the KAE1 / TsaD family. Fe(2+) is required as a cofactor.

It localises to the cytoplasm. The catalysed reaction is L-threonylcarbamoyladenylate + adenosine(37) in tRNA = N(6)-L-threonylcarbamoyladenosine(37) in tRNA + AMP + H(+). Its function is as follows. Required for the formation of a threonylcarbamoyl group on adenosine at position 37 (t(6)A37) in tRNAs that read codons beginning with adenine. Is involved in the transfer of the threonylcarbamoyl moiety of threonylcarbamoyl-AMP (TC-AMP) to the N6 group of A37, together with TsaE and TsaB. TsaD likely plays a direct catalytic role in this reaction. This chain is tRNA N6-adenosine threonylcarbamoyltransferase, found in Gloeothece citriformis (strain PCC 7424) (Cyanothece sp. (strain PCC 7424)).